The following is a 731-amino-acid chain: MAEKEATVYIVDVGHSMGKCRGGRTISDLDWMMLYVWDRITTTVSTGRKTATVGVVGLRTDGSSNPLWEKDEEESYAHLSVFQEIGQMLMPDIRKLRDLVKPSNTNQGDAISSIILAIDMIVRYCKRLKYKRKIVLVTDGRSTMDSDGIDSIVSKIKEEGIELVILGVDFDDPDYGFKEEDKDPFKTKNESVLKILADDADGAYGTLAQAVEEMTTPRIKVVRGIPSFRGDLRLGDPSQYSTGLTIQVERYYRTYVARPPAASAFALSIAPPKGQSTAESSVTLQNGDSTVETANASNNLSGVRNARSYQVIDENAPGGKKEVERDDLAKGYEYGRTAVHISESDEVITKLDTTAALEFIGFIQSENYERYMNMSTSNVIIAQKINDKAILALSSMIHALFELEYYAIGRLVTKDGKPPLMVLLAPLIETDFECLLEVQLPFAEDTRSYRFPPLDKIVTVSGKVVKEHRNLPSDDLLETMGKYVEDMDLSEFDENGDPFQSLALEDCYSPLVHRIDQAIRWRAVHPTKPLPPVPKVLEKLSHWPEELVKKSHDSLRDLISISAVKKVPPKAKGRKRRREADKPLSGLNVDDLLRGEKRLKISPENPIPEFKQTLANTEDISAISDAVKQMSAIIEDQIRQSLGDINYDRAIEGIGTMREELIAYEEPGLYNDFIRGLKEKLLDDKLGGDRREMWWLIRKSRLGLIDQKALDISDITEEQAREFLSSRPTTV.

The Ku domain occupies 238–486; the sequence is SQYSTGLTIQ…LETMGKYVED (249 aa).

It belongs to the ku80 family. In terms of assembly, heterodimer of Ku70 and Ku80.

Its subcellular location is the nucleus. It localises to the chromosome. It is found in the telomere. The enzyme catalyses ATP + H2O = ADP + phosphate + H(+). Its function is as follows. Single-stranded DNA-dependent ATP-dependent helicase. Involved in non-homologous end joining (NHEJ) DNA double strand break repair. DNA-binding is sequence-independent but has a high affinity to nicks in double-stranded DNA and to the ends of duplex DNA. Binds to naturally occurring chromosomal ends, and therefore provides chromosomal end protection. Required also for telomere recombination to repair telomeric ends in the absence of telomerase. KU70, of the KU70/KU80 heterodimer, binds to the stem loop of TLC1, the RNA component of telomerase. Involved in telomere maintenance. Interacts with telomeric repeats and subtelomeric sequences thereby controlling telomere length and protecting against subtelomeric rearrangement. Maintains telomeric chromatin, which is involved in silencing the expression of genes located at the telomere. Required for mating-type switching. This is ATP-dependent DNA helicase II subunit 2 (KU80) from Coccidioides immitis (strain RS) (Valley fever fungus).